A 97-amino-acid chain; its full sequence is UPF0235 protein DET1292 (97 aa).

The protein belongs to the UPF0235 family.

The protein is UPF0235 protein DET1292 of Dehalococcoides mccartyi (strain ATCC BAA-2266 / KCTC 15142 / 195) (Dehalococcoides ethenogenes (strain 195)).